Here is a 188-residue protein sequence, read N- to C-terminus: dCTP deaminase (188 aa).

DCTP-binding positions include 111–116, 135–137, Q156, Y170, and Q180; these read KSTYAR and TLE. Catalysis depends on E137, which acts as the Proton donor/acceptor.

Belongs to the dCTP deaminase family. Homotrimer.

The catalysed reaction is dCTP + H2O + H(+) = dUTP + NH4(+). It functions in the pathway pyrimidine metabolism; dUMP biosynthesis; dUMP from dCTP (dUTP route): step 1/2. Catalyzes the deamination of dCTP to dUTP. In Acidovorax sp. (strain JS42), this protein is dCTP deaminase.